The following is a 359-amino-acid chain: uncharacterized protein (359 aa).

Low complexity predominate over residues 73–88 (AATAGTTPATGASGSA). The segment at 73–93 (AATAGTTPATGASGSARPTDA) is disordered. Residues 179–354 (PSTCRGDNVS…AFSAAIQAGE (176 aa)) enclose the Macro domain.

This is an uncharacterized protein from Mycobacterium tuberculosis (strain ATCC 25618 / H37Rv).